A 415-amino-acid chain; its full sequence is Cell division control protein 11 (415 aa).

N-acetylserine is present on S2. Residue S2 is modified to Phosphoserine. Positions 12-19 (RKRKHLKR) match the Basic motif motif. Positions 19–298 (RGITFTVMIV…ERYRTEALSG (280 aa)) constitute a Septin-type G domain. The tract at residues 29–36 (GQSGSGRS) is G1 motif. Residues 29 to 36 (GQSGSGRS), G92, 172 to 180 (KSDSLTRDE), G230, and R247 each bind GTP. A G3 motif region spans residues 89–92 (DTPG). A G4 motif region spans residues 171 to 174 (SKSD). The residue at position 305 (S305) is a Phosphoserine. Residues 307–360 (RPNLTKLNGSSSSSTTTRRNTNPFKQSNNINNDVLNPASDMHGQSTGENNETYM) are disordered. Residues 316 to 328 (SSSSSTTTRRNTN) are compositionally biased toward low complexity. At T327 the chain carries Phosphothreonine. 2 stretches are compositionally biased toward polar residues: residues 329 to 340 (PFKQSNNINNDV) and 348 to 359 (HGQSTGENNETY). Residues 354-414 (ENNETYMTRE…LEKEAKIKQE (61 aa)) adopt a coiled-coil conformation. K412 participates in a covalent cross-link: Glycyl lysine isopeptide (Lys-Gly) (interchain with G-Cter in SUMO).

The protein belongs to the TRAFAC class TrmE-Era-EngA-EngB-Septin-like GTPase superfamily. Septin GTPase family. As to quaternary structure, component of the septin complex which consists of CDC3, CDC10, CDC11, CDC12 and probably SHS1 and rearranges to a cortical collar of highly ordered filaments at the mother-bud-neck. A complex formed by CDC3, CDC10, CDC11 and CDC12 is capable of forming long filaments in vitro and the components seem to be present in a 2:2:2:2 arrangement in vivo. The filaments are proposed to be formed by the end-to-end polymerization of CDC3-CDC12-CDC11 complexes with CDC10 serving as a bridge to bundle the polymers into paired filaments. Component of the GIN4 complex composed of at least BNI5, CDC3, CDC10, CDC11, CDC12, GIN4, NAP1 and SHS1. Self-associates. Interacts with BEM4, KCC4, SPR28 and SYP1. Interacts with BNI5. Post-translationally, sumoylated during mitosis on the mother cell side of the bud neck. Sumoylation probably plays a central role in regulating septin ring disassembly during the cell cycle.

The protein resides in the membrane. Its subcellular location is the bud neck. In terms of biological role, septins are GTPases involved in cytokinesis that assemble early in the cell cycle as a patch at the incipient bud site and form a ring approximate 15 minutes before bud emergence, which transforms into an hour-glass shaped collar of cortical filaments that spans both sides of the mother-bud neck. This collar persists until just before cytokinesis, when it splits into two rings that occupy opposite sides of the neck. The septins at the bud neck serve as a structural scaffold that recruits different components involved in diverse processes at specific stages during the cell cycle. Many proteins bind asymmetrically to the septin collar. The septin assembly is regulated by protein kinases GIN4 and/or CLA4. May act by recruiting MYO1 and HOF1, a protein involved in septation, to the site of cleavage. Septins are also involved in cell morphogenesis, bud site selection, chitin deposition, cell cycle regulation, cell compartmentalization and spore wall formation. CDCd11 with SHS1 11 are involved in the recruitment of BNI5 and thereby ensure efficient localization at the bud neck of MYO1, the type II myosin of the actomyosin contractile ring. This is Cell division control protein 11 from Saccharomyces cerevisiae (strain ATCC 204508 / S288c) (Baker's yeast).